The chain runs to 1008 residues: Phytosulfokine receptor 1 (1008 aa).

An N-terminal signal peptide occupies residues M1–S25. N-linked (GlcNAc...) asparagine glycosylation is found at N55, N64, and N73. 12 LRR repeats span residues T75–K98, L99–L123, K124–A148, Q150–N170, T172–K194, C195–L219, R221–L243, S244–E266, S291–M315, I316–C339, R341–N362, and F363–Q387. N106 is a glycosylation site (N-linked (GlcNAc...) asparagine). N-linked (GlcNAc...) asparagine glycosylation is found at N160, N170, and N187. N242 is a glycosylation site (N-linked (GlcNAc...) asparagine). R300 lines the phytosulfokine pocket. 2 N-linked (GlcNAc...) asparagine glycosylation sites follow: N301 and N311. Phytosulfokine-binding residues include N346, S370, and S372. N-linked (GlcNAc...) asparagine glycans are attached at residues N373, N378, and N391. LRR repeat units follow at residues L392–F414, E415–S438, N439–A464, and F466–L486. T398, N424, and D445 together coordinate phytosulfokine. N472 and N493 each carry an N-linked (GlcNAc...) asparagine glycan. K508 provides a ligand contact to phytosulfokine. N-linked (GlcNAc...) asparagine glycosylation is found at N510 and N534. 4 LRR repeats span residues I521 to N545, L546 to M570, T571 to L594, and F596 to T619. N-linked (GlcNAc...) asparagine glycans are attached at residues N606 and N622. A helical membrane pass occupies residues M660–L680. T731 carries the phosphothreonine modification. One can recognise a Protein kinase domain in the interval F734–L1005. Residues I740–V748 and K762 contribute to the ATP site. A phosphotyrosine mark is found at Y807 and Y847. The active-site Proton acceptor is D860. Residue Y902 is modified to Phosphotyrosine.

This sequence belongs to the protein kinase superfamily. Ser/Thr protein kinase family. As to quaternary structure, homo- and heterodimers with PSY1R. Heterodimers with the somatic embryogenesis receptor-like kinases (SERKs). PSK is not directly involved in PSKR-SERK interaction but stabilizes PSKR island domain for recruitment of a SERK. Part of a functional complex containing PSKR1, BAK1, CNGC17, and AHA. Interacts with AHA1, AHA2, and BAK1, but not with CNGC17 or BRI1. The cofactor is Mg(2+). Mn(2+) serves as cofactor. Weakly expressed in roots, leaves, stems and flowers. Expressed in the primary and lateral roots, including root primordia and root tips, but not in the hypocotyl.

It localises to the cell membrane. It catalyses the reaction L-seryl-[protein] + ATP = O-phospho-L-seryl-[protein] + ADP + H(+). It carries out the reaction L-threonyl-[protein] + ATP = O-phospho-L-threonyl-[protein] + ADP + H(+). The enzyme catalyses GTP = 3',5'-cyclic GMP + diphosphate. CGMP suppresses kinase activity. Phytosulfokine receptor with both a serine/threonine-protein kinase activity and a guanylate cyclase activity. Regulates, in response to phytosulfokine binding, a signaling cascade involved in plant cell differentiation, organogenesis, somatic embryogenesis, cellular proliferation and plant growth. Involved in plant immunity, with antagonistic effects on bacterial and fungal resistances. Not involved in PSY perception. CNGC17 and AHAs form a functional cation-translocating unit that is activated by PSKR1/BAK1 and possibly other BAK1/RLK complexes. This Arabidopsis thaliana (Mouse-ear cress) protein is Phytosulfokine receptor 1.